We begin with the raw amino-acid sequence, 250 residues long: ATP synthase subunit a (250 aa).

6 helical membrane-spanning segments follow: residues 26–46, 84–104, 114–134, 143–163, 193–213, and 216–236; these read FTNA…FLYF, FFPL…LGMF, IIVT…YGFY, VFVP…IEII, FVAS…LPLI, and VALT…FAVL.

It belongs to the ATPase A chain family. F-type ATPases have 2 components, CF(1) - the catalytic core - and CF(0) - the membrane proton channel. CF(1) has five subunits: alpha(3), beta(3), gamma(1), delta(1), epsilon(1). CF(0) has three main subunits: a(1), b(2) and c(9-12). The alpha and beta chains form an alternating ring which encloses part of the gamma chain. CF(1) is attached to CF(0) by a central stalk formed by the gamma and epsilon chains, while a peripheral stalk is formed by the delta and b chains.

It localises to the cell inner membrane. Key component of the proton channel; it plays a direct role in the translocation of protons across the membrane. In Rhizobium etli (strain ATCC 51251 / DSM 11541 / JCM 21823 / NBRC 15573 / CFN 42), this protein is ATP synthase subunit a.